Reading from the N-terminus, the 240-residue chain is uncharacterized protein (240 aa).

The first 30 residues, 1–30, serve as a signal peptide directing secretion; it reads MNKSGMSLIITMLLLIGTAIVIGAAYYAWS.

This is an uncharacterized protein from Methanocaldococcus jannaschii (strain ATCC 43067 / DSM 2661 / JAL-1 / JCM 10045 / NBRC 100440) (Methanococcus jannaschii).